We begin with the raw amino-acid sequence, 168 residues long: Transcription elongation factor GreB (168 aa).

Residues 61–84 (KKMLREIDSRVRFLRKRLENLKVV) adopt a coiled-coil conformation.

It belongs to the GreA/GreB family. GreB subfamily.

Its function is as follows. Necessary for efficient RNA polymerase transcription elongation past template-encoded arresting sites. The arresting sites in DNA have the property of trapping a certain fraction of elongating RNA polymerases that pass through, resulting in locked ternary complexes. Cleavage of the nascent transcript by cleavage factors such as GreA or GreB allows the resumption of elongation from the new 3'terminus. GreB releases sequences of up to 9 nucleotides in length. This is Transcription elongation factor GreB from Pseudomonas aeruginosa (strain ATCC 15692 / DSM 22644 / CIP 104116 / JCM 14847 / LMG 12228 / 1C / PRS 101 / PAO1).